The sequence spans 131 residues: Small ribosomal subunit protein eS17 (131 aa).

The protein belongs to the eukaryotic ribosomal protein eS17 family.

In Theileria annulata, this protein is Small ribosomal subunit protein eS17 (RPS17).